Here is a 124-residue protein sequence, read N- to C-terminus: Ribonuclease pancreatic (124 aa).

The segment covering 1–13 (KETAAAKFERQHM) has biased composition (basic and acidic residues). The tract at residues 1–22 (KETAAAKFERQHMDSSTSAASS) is disordered. Substrate contacts are provided by K7 and R10. H12 acts as the Proton acceptor in catalysis. Disulfide bonds link C26–C84, C40–C95, C58–C110, and C65–C72. N34 is a glycosylation site (N-linked (GlcNAc...) asparagine). Substrate contacts are provided by residues 41 to 45 (KPVNT), K66, and R85. Residue H119 is the Proton donor of the active site.

This sequence belongs to the pancreatic ribonuclease family. In terms of assembly, monomer. Interacts with and forms tight 1:1 complexes with RNH1. Dimerization of two such complexes may occur. Interaction with RNH1 inhibits this protein. As to expression, pancreas.

The protein resides in the secreted. The catalysed reaction is an [RNA] containing cytidine + H2O = an [RNA]-3'-cytidine-3'-phosphate + a 5'-hydroxy-ribonucleotide-3'-[RNA].. It catalyses the reaction an [RNA] containing uridine + H2O = an [RNA]-3'-uridine-3'-phosphate + a 5'-hydroxy-ribonucleotide-3'-[RNA].. Functionally, endonuclease that catalyzes the cleavage of RNA on the 3' side of pyrimidine nucleotides. Acts on single-stranded and double-stranded RNA. In Bison bison (American bison), this protein is Ribonuclease pancreatic (RNASE1).